The following is a 357-amino-acid chain: Quinolinate synthase (357 aa).

Residues H50 and S71 each contribute to the iminosuccinate site. Residue C116 participates in [4Fe-4S] cluster binding. Iminosuccinate contacts are provided by residues 142-144 (YAN) and S159. C203 provides a ligand contact to [4Fe-4S] cluster. Iminosuccinate-binding positions include 229–231 (HPE) and T246. C300 provides a ligand contact to [4Fe-4S] cluster.

The protein belongs to the quinolinate synthase family. Type 1 subfamily. The cofactor is [4Fe-4S] cluster.

It is found in the cytoplasm. It catalyses the reaction iminosuccinate + dihydroxyacetone phosphate = quinolinate + phosphate + 2 H2O + H(+). It participates in cofactor biosynthesis; NAD(+) biosynthesis; quinolinate from iminoaspartate: step 1/1. Functionally, catalyzes the condensation of iminoaspartate with dihydroxyacetone phosphate to form quinolinate. The chain is Quinolinate synthase from Shewanella sp. (strain MR-4).